A 2122-amino-acid polypeptide reads, in one-letter code: Pecanex-like protein 2 (2122 aa).

2 consecutive transmembrane segments (helical) span residues 36–53 (LYLW…HLAF) and 60–82 (ALFY…YRLH). Disordered stretches follow at residues 92 to 164 (QHRS…ELPA) and 180 to 250 (QPEA…LVNP). Polar residues-rich tracts occupy residues 146–157 (SRGQSVHSQHSS) and 185–203 (ASST…SQGR). Asparagine 288 carries N-linked (GlcNAc...) asparagine glycosylation. Low complexity-rich tracts occupy residues 392–407 (VTSS…AESA) and 458–476 (PDRC…PGST). Disordered stretches follow at residues 392–556 (VTSS…QIPN) and 575–634 (VVAP…PVFT). The span at 528–538 (STKEVVSDGEK) shows a compositional bias: basic and acidic residues. Asparagine 556 carries N-linked (GlcNAc...) asparagine glycosylation. Residues 599–618 (TKEEAVENEKPNGRDPKPGK) are compositionally biased toward basic and acidic residues. Residues 625–634 (DPANGSPVFT) are compositionally biased toward polar residues. A run of 13 helical transmembrane segments spans residues 825–845 (VAVL…NRGF), 849–869 (LWVL…LKSV), 882–902 (QIIA…ILLL), 933–953 (HLIV…FPQI), 976–998 (GITS…HAFC), 1010–1030 (HIPA…YHLS), 1080–1100 (LVIC…TVFL), 1105–1125 (FLSI…HHLL), 1174–1194 (YLLY…SISN), 1218–1238 (SFCN…FFHF), 1245–1265 (ESFL…GDLL), 1270–1290 (FVLA…HVFA), and 1305–1325 (TFAT…VIFI). Asparagine 1393, asparagine 1534, and asparagine 1802 each carry an N-linked (GlcNAc...) asparagine glycan. Disordered regions lie at residues 1858–1943 (SVGQ…SSGP) and 1955–1991 (STSV…TTGH). Residues 1888 to 1898 (ESRDGSTEQPR) are compositionally biased toward basic and acidic residues. Positions 1922–1942 (SQSVQAHSAISQRPPTLSSSG) are enriched in polar residues. A compositionally biased stretch (low complexity) spans 1968–1981 (SRLSLHTSAASLHS). N-linked (GlcNAc...) asparagine glycosylation is present at asparagine 2039. Residues 2097–2122 (VLCRRASQEDMGLDDTASQQSTSDEQ) are disordered. The span at 2112–2122 (TASQQSTSDEQ) shows a compositional bias: polar residues.

This sequence belongs to the pecanex family.

The protein resides in the membrane. May play a role in tumorigenesis. The protein is Pecanex-like protein 2 of Mus musculus (Mouse).